We begin with the raw amino-acid sequence, 384 residues long: PqqA peptide cyclase (384 aa).

The Radical SAM core domain occupies 14–226; that stretch reads IPAPVGLLAE…IRIVEAARER (213 aa). [4Fe-4S] cluster is bound by residues Cys28, Cys32, and Cys35.

Belongs to the radical SAM superfamily. PqqE family. In terms of assembly, interacts with PqqD. The interaction is necessary for activity of PqqE. The cofactor is [4Fe-4S] cluster.

It catalyses the reaction [PQQ precursor protein] + S-adenosyl-L-methionine = E-Y cross-linked-[PQQ precursor protein] + 5'-deoxyadenosine + L-methionine + H(+). It participates in cofactor biosynthesis; pyrroloquinoline quinone biosynthesis. Catalyzes the cross-linking of a glutamate residue and a tyrosine residue in the PqqA protein as part of the biosynthesis of pyrroloquinoline quinone (PQQ). The polypeptide is PqqA peptide cyclase (Methylorubrum populi (strain ATCC BAA-705 / NCIMB 13946 / BJ001) (Methylobacterium populi)).